Consider the following 899-residue polypeptide: Alanine--tRNA ligase (899 aa).

Zn(2+) is bound by residues His-595, His-599, Cys-703, and His-707.

It belongs to the class-II aminoacyl-tRNA synthetase family. Zn(2+) is required as a cofactor.

The protein resides in the cytoplasm. It carries out the reaction tRNA(Ala) + L-alanine + ATP = L-alanyl-tRNA(Ala) + AMP + diphosphate. Its function is as follows. Catalyzes the attachment of alanine to tRNA(Ala) in a two-step reaction: alanine is first activated by ATP to form Ala-AMP and then transferred to the acceptor end of tRNA(Ala). Also edits incorrectly charged Ser-tRNA(Ala) and Gly-tRNA(Ala) via its editing domain. The chain is Alanine--tRNA ligase from Caldivirga maquilingensis (strain ATCC 700844 / DSM 13496 / JCM 10307 / IC-167).